Reading from the N-terminus, the 148-residue chain is uncharacterized protein (148 aa).

The region spanning 4-65 (LDRVDMQLVK…IPDIDKLGYM (62 aa)) is the HTH asnC-type domain. The segment at residues 23 to 42 (YRELADILNTTRQRIARRID) is a DNA-binding region (H-T-H motif).

This is an uncharacterized protein from Pyrococcus horikoshii (strain ATCC 700860 / DSM 12428 / JCM 9974 / NBRC 100139 / OT-3).